Here is a 959-residue protein sequence, read N- to C-terminus: Isoleucine--tRNA ligase (959 aa).

The 'HIGH' region motif lies at 60 to 70 (PYANGSLHMGH). Glu569 contacts L-isoleucyl-5'-AMP. The 'KMSKS' region signature appears at 610–614 (KMSKS). Lys613 is an ATP binding site. Zn(2+) contacts are provided by Cys928, Cys931, Cys948, and Cys951.

This sequence belongs to the class-I aminoacyl-tRNA synthetase family. IleS type 1 subfamily. As to quaternary structure, monomer. The cofactor is Zn(2+).

It is found in the cytoplasm. It carries out the reaction tRNA(Ile) + L-isoleucine + ATP = L-isoleucyl-tRNA(Ile) + AMP + diphosphate. Functionally, catalyzes the attachment of isoleucine to tRNA(Ile). As IleRS can inadvertently accommodate and process structurally similar amino acids such as valine, to avoid such errors it has two additional distinct tRNA(Ile)-dependent editing activities. One activity is designated as 'pretransfer' editing and involves the hydrolysis of activated Val-AMP. The other activity is designated 'posttransfer' editing and involves deacylation of mischarged Val-tRNA(Ile). This chain is Isoleucine--tRNA ligase, found in Gloeothece citriformis (strain PCC 7424) (Cyanothece sp. (strain PCC 7424)).